We begin with the raw amino-acid sequence, 158 residues long: Large ribosomal subunit protein uL30 (158 aa).

It belongs to the universal ribosomal protein uL30 family. As to quaternary structure, part of the 50S ribosomal subunit.

This chain is Large ribosomal subunit protein uL30, found in Saccharolobus islandicus (strain Y.G.57.14 / Yellowstone #1) (Sulfolobus islandicus).